The primary structure comprises 134 residues: ATP synthase epsilon chain, chloroplastic (134 aa).

Belongs to the ATPase epsilon chain family. As to quaternary structure, F-type ATPases have 2 components, CF(1) - the catalytic core - and CF(0) - the membrane proton channel. CF(1) has five subunits: alpha(3), beta(3), gamma(1), delta(1), epsilon(1). CF(0) has three main subunits: a, b and c.

Its subcellular location is the plastid. The protein resides in the chloroplast thylakoid membrane. Produces ATP from ADP in the presence of a proton gradient across the membrane. The polypeptide is ATP synthase epsilon chain, chloroplastic (Spinacia oleracea (Spinach)).